Here is a 550-residue protein sequence, read N- to C-terminus: Dihydroxy-acid dehydratase (550 aa).

Aspartate 78 serves as a coordination point for Mg(2+). Position 119 (cysteine 119) interacts with [2Fe-2S] cluster. Mg(2+) contacts are provided by aspartate 120 and lysine 121. At lysine 121 the chain carries N6-carboxylysine. Cysteine 191 contacts [2Fe-2S] cluster. Mg(2+) is bound at residue glutamate 440. The Proton acceptor role is filled by serine 466.

This sequence belongs to the IlvD/Edd family. In terms of assembly, homodimer. It depends on [2Fe-2S] cluster as a cofactor. Mg(2+) is required as a cofactor.

The catalysed reaction is (2R)-2,3-dihydroxy-3-methylbutanoate = 3-methyl-2-oxobutanoate + H2O. It carries out the reaction (2R,3R)-2,3-dihydroxy-3-methylpentanoate = (S)-3-methyl-2-oxopentanoate + H2O. The protein operates within amino-acid biosynthesis; L-isoleucine biosynthesis; L-isoleucine from 2-oxobutanoate: step 3/4. It participates in amino-acid biosynthesis; L-valine biosynthesis; L-valine from pyruvate: step 3/4. In terms of biological role, functions in the biosynthesis of branched-chain amino acids. Catalyzes the dehydration of (2R,3R)-2,3-dihydroxy-3-methylpentanoate (2,3-dihydroxy-3-methylvalerate) into 2-oxo-3-methylpentanoate (2-oxo-3-methylvalerate) and of (2R)-2,3-dihydroxy-3-methylbutanoate (2,3-dihydroxyisovalerate) into 2-oxo-3-methylbutanoate (2-oxoisovalerate), the penultimate precursor to L-isoleucine and L-valine, respectively. In Methanococcus maripaludis (strain C7 / ATCC BAA-1331), this protein is Dihydroxy-acid dehydratase.